We begin with the raw amino-acid sequence, 1512 residues long: Lysophospholipase NTE1 (1512 aa).

Over 1 to 48 (MAAPDAMTSLVKSSVALLSSAHESLPTSLAAMKTAETAPSSTFGILGR) the chain is Cytoplasmic. A helical membrane pass occupies residues 49–69 (VILSILSVLPTLLFWVSYTLP). Residues 70–83 (TWLFTLFSMSLTFT) lie on the Lumenal side of the membrane. A helical membrane pass occupies residues 84-104 (MNFTTLMLVLVFVVSTISYFV). Residues 105 to 1512 (RYRYLTMYAR…RTMAPRRASI (1408 aa)) lie on the Cytoplasmic side of the membrane. Disordered stretches follow at residues 204–230 (NREESDSDEDDGELQGESGGGSAQAHR), 262–362 (RHDE…AHPD), 534–556 (TQMSRGTGRSGRSSFSQPYQHDV), and 740–770 (TEDDLFGPPLQPTATNTSLRNGENSKKKRSR). Residues 208–217 (SDSDEDDGEL) show a composition bias toward acidic residues. A compositionally biased stretch (polar residues) spans 268–291 (GPSSSTPMSPQHRPSMTRNSSFNM). Positions 343-358 (HSKQRRSPSRSTKPKS) are enriched in basic residues. Positions 537–549 (SRGTGRSGRSSFS) are enriched in low complexity. Residues 669–793 (LSAS…SNRS) and 830–950 (RLTT…IASR) each bind a nucleoside 3',5'-cyclic phosphate. The segment covering 751 to 761 (PTATNTSLRNG) has biased composition (polar residues). A PNPLA domain is found at 1209-1373 (LVLGGGGARG…IDNLTVAHMK (165 aa)). Residues 1213 to 1218 (GGGARG) carry the GXGXXG motif. Positions 1240–1244 (GTSIG) match the GXSXG motif. The active-site Nucleophile is Ser-1242. The Proton acceptor role is filled by Asp-1360. A DGA/G motif is present at residues 1360-1362 (DGG).

Belongs to the NTE family.

It localises to the endoplasmic reticulum membrane. It catalyses the reaction a 1-acyl-sn-glycero-3-phosphocholine + H2O = sn-glycerol 3-phosphocholine + a fatty acid + H(+). Its activity is regulated as follows. Inhibited by organophosphorus esters. Its function is as follows. Intracellular phospholipase B that catalyzes the double deacylation of phosphatidylcholine (PC) to glycerophosphocholine (GroPCho). Plays an important role in membrane lipid homeostasis. Responsible for the rapid PC turnover in response to inositol, elevated temperatures, or when choline is present in the growth medium. This Phaeosphaeria nodorum (strain SN15 / ATCC MYA-4574 / FGSC 10173) (Glume blotch fungus) protein is Lysophospholipase NTE1 (NTE1).